The chain runs to 448 residues: Charged multivesicular body protein 7 (448 aa).

The span at 1-12 (MCSPGRAPPGPA) shows a compositional bias: pro residues. The tract at residues 1-20 (MCSPGRAPPGPAPAGDLPPE) is disordered. The stretch at 241–392 (QLMQSEQLLS…DSLLQDSAKE (152 aa)) forms a coiled coil.

The protein belongs to the SNF7 family.

It is found in the cytoplasm. Its subcellular location is the nucleus envelope. In terms of biological role, ESCRT-III-like protein required to recruit the ESCRT-III complex to the nuclear envelope (NE) during late anaphase. Together with SPAST, the ESCRT-III complex promotes NE sealing and mitotic spindle disassembly during late anaphase. Recruited to the reforming NE during anaphase by LEMD2. Plays a role in the endosomal sorting pathway. The chain is Charged multivesicular body protein 7 (CHMP7) from Gallus gallus (Chicken).